The following is a 105-amino-acid chain: Large ribosomal subunit protein bL21c (105 aa).

It belongs to the bacterial ribosomal protein bL21 family. Part of the 50S ribosomal subunit.

The protein localises to the plastid. It is found in the chloroplast. Its function is as follows. This protein binds to 23S rRNA. The sequence is that of Large ribosomal subunit protein bL21c from Trieres chinensis (Marine centric diatom).